The sequence spans 372 residues: Alginate lyase (372 aa).

The N-terminal stretch at M1–A22 is a signal peptide. Substrate-binding positions include S61–K62, H134–T135, and Y252.

This sequence belongs to the polysaccharide lyase 5 family.

The protein localises to the periplasm. It carries out the reaction Eliminative cleavage of alginate to give oligosaccharides with 4-deoxy-alpha-L-erythro-hex-4-enuronosyl groups at their non-reducing ends and beta-D-mannuronate at their reducing end.. Monovalent cations such as potassium and sodium enhance activity, as well as a combined action of these cations with magnesium. However, other cations like calcium, cobalt, manganese and zinc, or the presence of EDTA, do not affect the enzymatic activity. Its function is as follows. Catalyzes the depolymerization of alginate by cleaving the beta-1,4 glycosidic bond between two adjacent sugar residues via a beta-elimination mechanism. Degrades deacetylated polymannuronate alginate more efficiently than non-deacetylated polyM. Is able to degrade its own alginate, but at a lower efficiency than that produced from M.pyriferia and P.aeruginosa. May serve to degrade mislocalized alginate that is trapped in the periplasmic space. The protein is Alginate lyase of Azotobacter chroococcum mcd 1.